Reading from the N-terminus, the 121-residue chain is Large ribosomal subunit protein bL20 (121 aa).

This sequence belongs to the bacterial ribosomal protein bL20 family.

Binds directly to 23S ribosomal RNA and is necessary for the in vitro assembly process of the 50S ribosomal subunit. It is not involved in the protein synthesizing functions of that subunit. This Wolbachia sp. subsp. Brugia malayi (strain TRS) protein is Large ribosomal subunit protein bL20.